A 729-amino-acid polypeptide reads, in one-letter code: Triadin (729 aa).

A disordered region spans residues 1–28 (MTEITAEGNASTTTTVIDSKNGSVPKSP). Topologically, residues 1-47 (MTEITAEGNASTTTTVIDSKNGSVPKSPGKVLKRTVTEDIVTTFSSP) are cytoplasmic. The segment covering 8–24 (GNASTTTTVIDSKNGSV) has biased composition (polar residues). Residues 48–68 (AAWLLVIALIITWSAVAIVMF) form a helical membrane-spanning segment. Over 69–729 (DLVDYKNFSA…NSPGQKQQGQ (661 aa)) the chain is Lumenal. Asparagine 75 carries N-linked (GlcNAc...) asparagine glycosylation. Residues 117–129 (EDEEDDDGDEDTD) are compositionally biased toward acidic residues. Disordered regions lie at residues 117-265 (EDEE…EQKD), 281-682 (DLKP…PTKQ), and 705-729 (PFTPADRPGESSGQANSPGQKQQGQ). Composition is skewed to basic and acidic residues over residues 130–265 (KGEI…EQKD), 309–357 (LEEK…KASE), 371–433 (AKKD…KEEI), 444–509 (GKKE…EVKP), 516–531 (GKKEEKPEPQIKKEAK), 538–562 (VQIHKQDIVKPEKTVSHGKPEEKVL), 580–598 (KKAEHREREPPSIKTDKPK), and 609–674 (ESGK…KEGT). N-linked (GlcNAc...) asparagine glycosylation is present at asparagine 647. Residues 715–729 (SSGQANSPGQKQQGQ) are compositionally biased toward polar residues.

In terms of assembly, homooligomer of variable subunit number; disulfide-linked. Interacts with CASQ1 and RYR1 in skeletal muscle. Interacts with CASQ2. Post-translationally, phosphorylated by CaMK2. N-glycosylated.

It localises to the cell membrane. Its subcellular location is the sarcoplasmic reticulum membrane. Functionally, contributes to the regulation of lumenal Ca2+ release via the sarcoplasmic reticulum calcium release channels RYR1 and RYR2, a key step in triggering skeletal and heart muscle contraction. Required for normal organization of the triad junction, where T-tubules and the sarcoplasmic reticulum terminal cisternae are in close contact. Required for normal skeletal muscle strength. Plays a role in excitation-contraction coupling in the heart and in regulating the rate of heart beats. The protein is Triadin (TRDN) of Homo sapiens (Human).